We begin with the raw amino-acid sequence, 350 residues long: MVFRIASSPYTHNQRQTSRIMMLVTLATVPGIAVQWYFFGYGSLVQILLAIVSALASEALVIRLRKLPLKSHLGDNSALLTGLLLGVSIPPLAPWWMVVLGTAFAVIIAKQLYGGLGHNPFNPAMIGYVVLLISFPVQMTNWLPPQQIAATAPGFLDALQVIFHGVTASGDTMSQLRLGIDGVSQATPLDTFKTGLHAGHPAGELLAQPIYGGALAGLGWQWVNLAYLAGGLFLLARGTIRWHIPVSFLVTLAVCSTLGWLIAPEKFLSPLMHLLSGATMLGAFFILTDPVTASTTNKGRLVFGALVGLLVWLIRSFGGYPDGVAFAVLLANITVPLIDYYTRPRVYGHR.

Transmembrane regions (helical) follow at residues 20 to 39 (IMML…WYFF), 89 to 109 (IPPL…VIIA), and 123 to 143 (PAMI…TNWL). Thr187 bears the FMN phosphoryl threonine mark. 5 consecutive transmembrane segments (helical) span residues 215–235 (LAGL…LFLL), 244–264 (IPVS…LIAP), 267–287 (FLSP…FFIL), 301–321 (LVFG…GGYP), and 322–342 (DGVA…DYYT).

It belongs to the NqrB/RnfD family. As to quaternary structure, the complex is composed of six subunits: RnfA, RnfB, RnfC, RnfD, RnfE and RnfG. Requires FMN as cofactor.

Its subcellular location is the cell inner membrane. Functionally, part of a membrane-bound complex that couples electron transfer with translocation of ions across the membrane. The chain is Ion-translocating oxidoreductase complex subunit D from Cronobacter sakazakii (strain ATCC BAA-894) (Enterobacter sakazakii).